Here is a 253-residue protein sequence, read N- to C-terminus: Putative enoyl-CoA hydratase (253 aa).

Residue E131 is part of the active site.

It belongs to the enoyl-CoA hydratase/isomerase family. Homohexamer; dimer of trimers.

The enzyme catalyses a (3S)-3-hydroxyacyl-CoA = a (2E)-enoyl-CoA + H2O. This is Putative enoyl-CoA hydratase from Thermus thermophilus (strain ATCC 27634 / DSM 579 / HB8).